The chain runs to 381 residues: Orotidine 5'-phosphate decarboxylase (381 aa).

Residues aspartate 42, 64–66 (KTH), 99–108 (DRKFGDIGHT), tyrosine 333, and arginine 352 each bind substrate. The active-site Proton donor is lysine 101. The segment at 311-333 (LPPEDEDQQTNGSVGGDGQGQQY) is disordered.

Belongs to the OMP decarboxylase family.

It catalyses the reaction orotidine 5'-phosphate + H(+) = UMP + CO2. It functions in the pathway pyrimidine metabolism; UMP biosynthesis via de novo pathway; UMP from orotate: step 2/2. This Hypocrea jecorina (Trichoderma reesei) protein is Orotidine 5'-phosphate decarboxylase (ura3).